The primary structure comprises 905 residues: DNA mismatch repair protein MutS (905 aa).

A disordered region spans residues 272–292; it reads KKPPLSPPSREATGSTMAIDP. Position 654–661 (654–661) interacts with ATP; it reads GPNMAGKS.

This sequence belongs to the DNA mismatch repair MutS family.

This protein is involved in the repair of mismatches in DNA. It is possible that it carries out the mismatch recognition step. This protein has a weak ATPase activity. This is DNA mismatch repair protein MutS from Rhodopseudomonas palustris (strain BisB18).